A 285-amino-acid polypeptide reads, in one-letter code: MSSQSHIPYAVRASRHSNPLARQLFQIAEEKKSNVVVSADVTTSKELLDLADRLGPYITVLKTHIDILTDLSPTTLTSLKSLASKHRFLLFEDRKFVDIGSTVQKQYHGGSLRISEWAHIVNCAMLAGPGIVDALAQTASTPEFRSVYANEVEGGRALLILAEMTSKGSMATGAYTQLSVEAARRHRAFVLGFVATRALNDVLPVSTVDGDEEDFVVFTTGVSLSASGDALGQQYQTPTSAVERGADFIISGRGIYAAEDPLEAVLRYREEGWKAYLERVKGWKA.

Residues Asp40, 62–64 (KTH), 93–102 (DRKFVDIGST), Tyr235, and Arg253 each bind substrate. Residue Lys95 is the Proton donor of the active site.

Belongs to the OMP decarboxylase family.

The enzyme catalyses orotidine 5'-phosphate + H(+) = UMP + CO2. It functions in the pathway pyrimidine metabolism; UMP biosynthesis via de novo pathway; UMP from orotate: step 2/2. This is Orotidine 5'-phosphate decarboxylase (URA3) from Paracoccidioides brasiliensis.